The primary structure comprises 147 residues: Hemoglobin subunit epsilon (147 aa).

In terms of domain architecture, Globin spans 3–147 (HFTAEEKAAV…VAIALAHKYH (145 aa)). A phosphoserine mark is found at serine 14 and serine 51. Heme b-binding residues include histidine 64 and histidine 93.

This sequence belongs to the globin family. Heterotetramer of two alpha chains and two epsilon chains in early embryonic hemoglobin Gower-2; two zeta chains and two epsilon chains in early embryonic hemoglobin Gower-1. As to expression, red blood cells.

Functionally, the epsilon chain is a beta-type chain of early mammalian embryonic hemoglobin. The sequence is that of Hemoglobin subunit epsilon (HBE1) from Pongo pygmaeus (Bornean orangutan).